We begin with the raw amino-acid sequence, 20 residues long: Antiviral protein Y3 (20 aa).

The chain is Antiviral protein Y3 from Pleurotus citrinopileatus (Golden oyster mushroom).